Reading from the N-terminus, the 425-residue chain is Protein CLP1 homolog (425 aa).

ATP contacts are provided by residues Glu-18, Lys-59, and 121–126; that span reads DVGKST.

The protein belongs to the Clp1 family. Clp1 subfamily.

Its subcellular location is the nucleus. Its function is as follows. Required for endonucleolytic cleavage during polyadenylation-dependent pre-mRNA 3'-end formation. The polypeptide is Protein CLP1 homolog (cbc) (Drosophila grimshawi (Hawaiian fruit fly)).